The chain runs to 281 residues: MSQTSTLKGQCIAEFLGTGLLIFFGVGCVAALKVAGASFGQWEISVIWGLGVAMAIYLTAGVSGAHLNPAVTIALWLFACFDKRKVIPFIVSQVAGAFCAAALVYGLYYNLFFDFEQTHHIVRGSVESVDLAGTFSTYPNPHINFVQAFAVEMVITAILMGLILALTDDGNGVPRGPLAPLLIGLLIAVIGASMGPLTGFAMNPARDFGPKVFAWLAGWGNVAFTGGRDIPYFLVPLFSPIVGAIVGAFAYRKLIGRHLPCDICVVEEKETTTPSEQKASL.

Residues 1-5 (MSQTS) lie on the Cytoplasmic side of the membrane. A helical transmembrane segment spans residues 6–34 (TLKGQCIAEFLGTGLLIFFGVGCVAALKV). Over 35-39 (AGASF) the chain is Periplasmic. Residues 40–60 (GQWEISVIWGLGVAMAIYLTA) form a helical membrane-spanning segment. Residues 61-63 (GVS) lie on the Cytoplasmic side of the membrane. An intramembrane segment occupies 64 to 67 (GAHL). The short motif at 68-70 (NPA) is the NPA 1 element. Positions 68 to 78 (NPAVTIALWLF) form an intramembrane region, helical. At 79 to 84 (ACFDKR) the chain is on the cytoplasmic side. The chain crosses the membrane as a helical span at residues 85 to 108 (KVIPFIVSQVAGAFCAAALVYGLY). Over 109–143 (YNLFFDFEQTHHIVRGSVESVDLAGTFSTYPNPHI) the chain is Periplasmic. Residues 144-169 (NFVQAFAVEMVITAILMGLILALTDD) form a helical membrane-spanning segment. Over 170–177 (GNGVPRGP) the chain is Cytoplasmic. The helical transmembrane segment at 178–194 (LAPLLIGLLIAVIGASM) threads the bilayer. The Periplasmic segment spans residues 195–198 (GPLT). An intramembrane segment occupies 199–202 (GFAM). An NPA 2 motif is present at residues 203 to 205 (NPA). An intramembrane region (helical) is located at residues 203–216 (NPARDFGPKVFAWL). The Periplasmic portion of the chain corresponds to 217–231 (AGWGNVAFTGGRDIP). A helical transmembrane segment spans residues 232-254 (YFLVPLFSPIVGAIVGAFAYRKL). The Cytoplasmic portion of the chain corresponds to 255 to 281 (IGRHLPCDICVVEEKETTTPSEQKASL).

This sequence belongs to the MIP/aquaporin (TC 1.A.8) family. Homotetramer.

It is found in the cell inner membrane. It catalyses the reaction glycerol(in) = glycerol(out). In terms of biological role, mediates glycerol diffusion across the cytoplasmic membrane via a pore-type mechanism. The polypeptide is Glycerol uptake facilitator protein (glpF) (Shigella flexneri).